The chain runs to 309 residues: Potassium channel subfamily K member 16 (309 aa).

Residues 1–13 (MPSAGLCSCWGGR) lie on the Cytoplasmic side of the membrane. A helical transmembrane segment spans residues 14 to 34 (VLPLLLAYVCYLLLGATIFQL). Positions 98-116 (SFFFAGTVVTTIGYGNLAP) form an intramembrane region, pore-forming. T108, I109, G110, and Y111 together coordinate K(+). The interval 108-113 (TIGYGN) is selectivity filter 1. The helical transmembrane segment at 120-140 (AGQVFCVFYALLGIPLNVIFL) threads the bilayer. Residues 141–165 (NHLGTGLRAHLAAIERWEDRPRRSQ) lie on the Cytoplasmic side of the membrane. The chain crosses the membrane as a helical span at residues 166–186 (VLQVLGLALFLTLGTLVILIF). An intramembrane region (pore-forming) is located at residues 202–221 (GFYFAFITLSTIGFGDYVVG). T212, I213, G214, and F215 together coordinate K(+). The selectivity filter 2 stretch occupies residues 212-217 (TIGFGD). Residues 238–258 (IWILLGLAWLALILPLGPLLL) traverse the membrane as a helical segment. At 259-309 (HRCCQLWLLSLRQGCGAKAAPGRRPRRGSTAARGVQVTPQDFPISKKGLGS) the chain is on the cytoplasmic side.

It belongs to the two pore domain potassium channel (TC 1.A.1.8) family. As to quaternary structure, homodimer; disulfide-linked. Heterodimer with KCNK17 and KCNK5. Highly expressed in pancreas, in both endocrine (alpha, beta, gamma, delta, and epsilon) and exocrine (acinar and ductal) cells. Expressed in pacreatic beta-cells (at protein level). Expressed in pacreatic delta-cells (at protein level). Not detectable in the other tissues tested.

The protein localises to the endoplasmic reticulum membrane. The protein resides in the cell membrane. It localises to the mitochondrion inner membrane. The enzyme catalyses K(+)(in) = K(+)(out). It carries out the reaction Rb(+)(in) = Rb(+)(out). It catalyses the reaction Cs(+)(in) = Cs(+)(out). With respect to regulation, the channel conductance is stimulated by extracellular alkaline pH. Inhibited by Ba(2+) ions, quinine, quinidine, chloroform and halothane. Functionally, k(+) channel that conducts voltage-dependent outward rectifying currents upon membrane depolarization. Voltage sensing is coupled to K(+) electrochemical gradient in an 'ion flux gating' mode where outward but not inward ion flow opens the gate. Homo- and heterodimerizes to form functional channels with distinct regulatory and gating properties. In pancreatic islets, conducts K(+) countercurrents for Ca(2+) release from the endoplasmic reticulum (ER) and regulates the frequency and duration of cytosolic Ca(2+) oscillations coupled to secretion of pancreatic hormones. In pancreatic beta cells, drives ER Ca(2+) efflux, which in turn activates Ca(2+)-dependent plasma membrane K(+) slow currents and cytosolic Ca(2+) influx, overall contributing to synchronous cytosolic Ca(2+) oscillations. Limits glucose-induced cytosolic Ca(2+) oscillations coupled to second-phase INS secretion. Contributes to beta cell adaptation to acute inflammation by maintaining normal cytosolic Ca(2+) levels and INS secretion. May regulate beta cell mitochondrial Ca(2+) levels either indirectly via ER Ca(2+) efflux or directly by hyperpolarizing the mitochondrial membrane potential. Limits mitochondrial Ca(2+) oscillations and ATP production involved in glucose homeostasis upon metabolic stress. In pancreatic delta cells, limits Ca(2+)-induced Ca(2+)-release involved in somatostatin secretion and modulates islet paracrine signaling involved in glucagon secretion. Permeable to other monovalent cations such as Rb(+) and Cs(+). The sequence is that of Potassium channel subfamily K member 16 from Homo sapiens (Human).